We begin with the raw amino-acid sequence, 273 residues long: Phosphate import ATP-binding protein PstB (273 aa).

Residues 27-268 enclose the ABC transporter domain; sequence VTVRDLNFYY…PSDRRTQDYI (242 aa). Position 59 to 66 (59 to 66) interacts with ATP; it reads GPSGCGKS.

Belongs to the ABC transporter superfamily. Phosphate importer (TC 3.A.1.7) family. As to quaternary structure, the complex is composed of two ATP-binding proteins (PstB), two transmembrane proteins (PstC and PstA) and a solute-binding protein (PstS).

It is found in the cell inner membrane. It catalyses the reaction phosphate(out) + ATP + H2O = ADP + 2 phosphate(in) + H(+). In terms of biological role, part of the ABC transporter complex PstSACB involved in phosphate import. Responsible for energy coupling to the transport system. In Rhodopseudomonas palustris (strain ATCC BAA-98 / CGA009), this protein is Phosphate import ATP-binding protein PstB.